A 162-amino-acid chain; its full sequence is Large ribosomal subunit protein uL10 (162 aa).

Belongs to the universal ribosomal protein uL10 family. Part of the ribosomal stalk of the 50S ribosomal subunit. The N-terminus interacts with L11 and the large rRNA to form the base of the stalk. The C-terminus forms an elongated spine to which L12 dimers bind in a sequential fashion forming a multimeric L10(L12)X complex.

Functionally, forms part of the ribosomal stalk, playing a central role in the interaction of the ribosome with GTP-bound translation factors. This Borrelia recurrentis (strain A1) protein is Large ribosomal subunit protein uL10.